Reading from the N-terminus, the 147-residue chain is Deoxyuridine 5'-triphosphate nucleotidohydrolase (147 aa).

Residues 67–69 (RSG), asparagine 80, and 84–86 (LID) each bind substrate.

It belongs to the dUTPase family. Requires Mg(2+) as cofactor.

It carries out the reaction dUTP + H2O = dUMP + diphosphate + H(+). It functions in the pathway pyrimidine metabolism; dUMP biosynthesis; dUMP from dCTP (dUTP route): step 2/2. Functionally, this enzyme is involved in nucleotide metabolism: it produces dUMP, the immediate precursor of thymidine nucleotides and it decreases the intracellular concentration of dUTP so that uracil cannot be incorporated into DNA. The sequence is that of Deoxyuridine 5'-triphosphate nucleotidohydrolase from Dictyoglomus turgidum (strain DSM 6724 / Z-1310).